We begin with the raw amino-acid sequence, 526 residues long: Lysine--tRNA ligase (526 aa).

Mg(2+) contacts are provided by glutamate 431 and glutamate 438.

The protein belongs to the class-II aminoacyl-tRNA synthetase family. As to quaternary structure, homodimer. Requires Mg(2+) as cofactor.

It is found in the cytoplasm. The catalysed reaction is tRNA(Lys) + L-lysine + ATP = L-lysyl-tRNA(Lys) + AMP + diphosphate. The sequence is that of Lysine--tRNA ligase (lysS) from Chlamydia trachomatis serovar D (strain ATCC VR-885 / DSM 19411 / UW-3/Cx).